The chain runs to 791 residues: MRRSLAPSQRIGQSTASRNAFTPPLLQKKNKRACQKDLRLDTDADEDKERKRFGLRDATNSEIPLPIRFTANSAYELAIAQVLARKFKVPIDNYVPDYGGNRCLGVRRVVVRRPLHDPQACNALVLFQPPNYTEHERMSMDPSKVLVHVVVDPLLSNILRPHQREGVRFMYECVEGKKGDFNGCIMADEMGLGKTLQCVTLVWTLLRQGPESKPTINKAIVVSPSSLVKNWEKEFTKWLQGRLLCLAMEGGTKENTIRVLEQFSMTSSKLGTPVLLISYETFRIYAEILCKYEVGMVICDEGHRLKNSDNLTYQALMGLKTKRRVLLSGTPIQNDLTEYFSLVNFVNPEMLGTAADFKRNFENSILRGQNADSTEGERKKAIEKTQELIGLVDQCIIRRTNQILTKYLPIKFEMVICVKLTAIQLQLYTNFLNSDQVRRSLADCNEKASLTALADITTLKKICSHPDLIHQKIEAKEKGFENSQNVLPSNYKPKEICPEWSGKFMLLDFMLAAIRAAGNDKVVLISNYTQTLDLFEQLARKRKYGFVRLDGTMSIKKRSKVVDKFNDPDSECFLFMLSSKAGGCGLNLIGANRLFMFDPDWNPANDEQAMARVWRDGQKKPCYIYRLVASGTIEEKILQRQTHKKSLSSTIIDNNESSEKHFTRDDLKDLFSFDQKILSDTHEKLKCKRCVQNIQTKPPSESTDCTSHLSQWYHCSNNRGLPDSILAQAWTDSKCVSFVFHHRSQAKEVVESPESAAAEAESVEEESQPTQRKRPSPPLSDDSADEDFIGF.

A compositionally biased stretch (polar residues) spans 1 to 20; it reads MRRSLAPSQRIGQSTASRNA. The tract at residues 1–53 is disordered; that stretch reads MRRSLAPSQRIGQSTASRNAFTPPLLQKKNKRACQKDLRLDTDADEDKERKRF. Residues 2-9 are required for chromatin remodeling, strand pairing activities and coupling of ATPase activity; it reads RRSLAPSQ. Threonine 22 carries the phosphothreonine modification. A compositionally biased stretch (basic and acidic residues) spans 34–53; that stretch reads CQKDLRLDTDADEDKERKRF. One can recognise a Helicase ATP-binding domain in the interval 175-349; the sequence is EGKKGDFNGC…FSLVNFVNPE (175 aa). 188 to 195 provides a ligand contact to ATP; the sequence is DEMGLGKT. The DEGH box motif lies at 300–303; that stretch reads DEGH. One can recognise a Helicase C-terminal domain in the interval 506-663; sequence LLDFMLAAIR…NNESSEKHFT (158 aa). Positions 747-791 are disordered; the sequence is KEVVESPESAAAEAESVEEESQPTQRKRPSPPLSDDSADEDFIGF. Positions 782–791 are enriched in acidic residues; that stretch reads DSADEDFIGF.

It belongs to the SNF2/RAD54 helicase family. In terms of assembly, interacts (via N-terminus) with spn-A/Rad51.

It localises to the nucleus. Its function is as follows. Involved in mitotic DNA repair and meiotic recombination. Functions in the recombinational DNA repair pathway. Essential for interhomolog gene conversion (GC), but may have a less important role in intersister GC than spn-A/Rad51. In the presence of DNA, spn-A/Rad51 enhances the ATPase activity of okr/Rad54. The protein is DNA repair and recombination protein RAD54-like of Drosophila ananassae (Fruit fly).